A 153-amino-acid polypeptide reads, in one-letter code: UPF0178 protein Ccel_2994 (153 aa).

This sequence belongs to the UPF0178 family.

This Ruminiclostridium cellulolyticum (strain ATCC 35319 / DSM 5812 / JCM 6584 / H10) (Clostridium cellulolyticum) protein is UPF0178 protein Ccel_2994.